We begin with the raw amino-acid sequence, 101 residues long: Hg-scorpine-like-2 (101 aa).

An N-terminal signal peptide occupies residues 1–17 (MKLTILILLVITSFCSC). A BetaSPN-type CS-alpha/beta domain is found at 60–100 (QQLCMFNKDVAGWCEKSCQQSAHQKGYCHGTKCKCGIPLNY). Intrachain disulfides connect cysteine 63/cysteine 87, cysteine 73/cysteine 92, and cysteine 77/cysteine 94.

The protein belongs to the long chain scorpion toxin family. Class 3 subfamily. As to expression, expressed by the venom gland.

The protein localises to the secreted. Functionally, inhibits voltage-gated potassium channels. In Hoffmannihadrurus gertschi (Scorpion), this protein is Hg-scorpine-like-2.